A 599-amino-acid polypeptide reads, in one-letter code: Elongation factor 4 (599 aa).

Positions 2–184 (KNIRNFSIIA…RLVRDIPPPE (183 aa)) constitute a tr-type G domain. Residues 14–19 (DHGKST) and 131–134 (NKID) each bind GTP.

This sequence belongs to the TRAFAC class translation factor GTPase superfamily. Classic translation factor GTPase family. LepA subfamily.

It localises to the cell inner membrane. The enzyme catalyses GTP + H2O = GDP + phosphate + H(+). Required for accurate and efficient protein synthesis under certain stress conditions. May act as a fidelity factor of the translation reaction, by catalyzing a one-codon backward translocation of tRNAs on improperly translocated ribosomes. Back-translocation proceeds from a post-translocation (POST) complex to a pre-translocation (PRE) complex, thus giving elongation factor G a second chance to translocate the tRNAs correctly. Binds to ribosomes in a GTP-dependent manner. This Shigella sonnei (strain Ss046) protein is Elongation factor 4.